The primary structure comprises 180 residues: Cytidylate kinase 2 (180 aa).

Residue Gly-7–Thr-15 coordinates ATP.

This sequence belongs to the cytidylate kinase family. Type 2 subfamily.

Its subcellular location is the cytoplasm. It catalyses the reaction CMP + ATP = CDP + ADP. The enzyme catalyses dCMP + ATP = dCDP + ADP. This is Cytidylate kinase 2 (cmk2) from Borreliella burgdorferi (strain ATCC 35210 / DSM 4680 / CIP 102532 / B31) (Borrelia burgdorferi).